Consider the following 133-residue polypeptide: uncharacterized protein (133 aa).

The chain crosses the membrane as a helical span at residues 11-31; the sequence is YFLISVFLIFIVSGITYFYST.

The protein localises to the membrane. This is an uncharacterized protein from Borreliella burgdorferi (strain ATCC 35210 / DSM 4680 / CIP 102532 / B31) (Borrelia burgdorferi).